Here is a 491-residue protein sequence, read N- to C-terminus: Rab5 GDP/GTP exchange factor (491 aa).

The tract at residues 1–74 (MSLKSERRGI…EEEAFASSQS (74 aa)) is interaction with ubiquitinated proteins. The A20-type zinc finger occupies 13 to 47 (DQSDLLCKKGCGYYGNPAWQGFCSKCWREEYHKAR). Residues Cys-19, Cys-23, Cys-35, and Cys-38 each contribute to the Zn(2+) site. The segment at 66 to 85 (EEAFASSQSSQGAQSLTFSK) is disordered. Over residues 69-84 (FASSQSSQGAQSLTFS) the composition is skewed to low complexity. Phosphoserine occurs at positions 124 and 132. An N6-acetyllysine mark is found at Lys-151 and Lys-170. Residues 232–375 (EKKDLAIQKR…IEKLDAQSLN (144 aa)) enclose the VPS9 domain. Residues Ser-373, Ser-377, Ser-390, and Ser-400 each carry the phosphoserine modification. The tract at residues 462 to 491 (PPNQPLAAIDSENVENDKLPPPLQPQVYAG) is disordered.

In terms of assembly, interacts with RGS14; the interaction is GTP-dependent. Heterodimer with RABEP1. The heterodimer binds RAB4A and RAB5A that have been activated by GTP-binding. Interacts with RAB21, and with 100-fold lower affinity also with RAB22. Binds TSC2, GGA1, GGA2, GGA3, AP1G1 and AP1G2. Interacts with ubiquitinated EGFR. Monoubiquitinated.

The protein localises to the cytoplasm. It localises to the early endosome. Its subcellular location is the recycling endosome. In terms of biological role, rab effector protein acting as linker between gamma-adaptin, RAB4A or RAB5A. Involved in endocytic membrane fusion and membrane trafficking of recycling endosomes. Stimulates nucleotide exchange on RAB5A. Can act as a ubiquitin ligase. This Homo sapiens (Human) protein is Rab5 GDP/GTP exchange factor (RABGEF1).